A 161-amino-acid chain; its full sequence is RNA pyrophosphohydrolase (161 aa).

One can recognise a Nudix hydrolase domain in the interval 12–154 (PYRPGVGMMI…KRKLYQAVVK (143 aa)). The Nudix box motif lies at 46–67 (GGIVPGETPSIAAMREMLEEIG).

Belongs to the Nudix hydrolase family. RppH subfamily. A divalent metal cation is required as a cofactor.

Accelerates the degradation of transcripts by removing pyrophosphate from the 5'-end of triphosphorylated RNA, leading to a more labile monophosphorylated state that can stimulate subsequent ribonuclease cleavage. The sequence is that of RNA pyrophosphohydrolase from Rickettsia bellii (strain OSU 85-389).